A 410-amino-acid polypeptide reads, in one-letter code: Venom metalloproteinase 2 (410 aa).

Positions 1–22 (MDTFILTYSILFLALFIESIHS) are cleaved as a signal peptide. N64, N112, N187, N231, N292, and N307 each carry an N-linked (GlcNAc...) asparagine glycan. In terms of domain architecture, Peptidase M12B spans 214–410 (FYPKLLVLVD…NNNVSKFIWS (197 aa)). H365 provides a ligand contact to Zn(2+). E366 is an active-site residue. Zn(2+) is bound by residues H369 and H375. N-linked (GlcNAc...) asparagine glycosylation is present at N403.

It in the C-terminal section; belongs to the venom metalloproteinase (M12B) family. In terms of assembly, monomer. Zn(2+) serves as cofactor. Expressed by the venom gland.

Its subcellular location is the secreted. Its activity is regulated as follows. The gelatinase activity is inhibited by EDTA. The recombinant protein has gelatinase activity. In vivo, injection of this recombinant into fifth instar L.oleracea (host) larvae results in partial insect mortality associated with the molt to sixth instar, with surviving insects showing retarded development and growth. This chain is Venom metalloproteinase 2, found in Eulophus pennicornis (Parasitoid wasp).